The primary structure comprises 228 residues: NAD(P)H-hydrate epimerase (228 aa).

The YjeF N-terminal domain occupies 9–209; it reads VRAVERLAHR…LLGLTPAFLA (201 aa). 53–57 is a binding site for (6S)-NADPHX; that stretch reads NNGGD. Residues asparagine 54 and aspartate 115 each coordinate K(+). (6S)-NADPHX contacts are provided by residues 119 to 125 and aspartate 148; that span reads GIGLARP. Serine 151 serves as a coordination point for K(+).

This sequence belongs to the NnrE/AIBP family. K(+) is required as a cofactor.

The enzyme catalyses (6R)-NADHX = (6S)-NADHX. It catalyses the reaction (6R)-NADPHX = (6S)-NADPHX. Catalyzes the epimerization of the S- and R-forms of NAD(P)HX, a damaged form of NAD(P)H that is a result of enzymatic or heat-dependent hydration. This is a prerequisite for the S-specific NAD(P)H-hydrate dehydratase to allow the repair of both epimers of NAD(P)HX. This Bordetella bronchiseptica (strain ATCC BAA-588 / NCTC 13252 / RB50) (Alcaligenes bronchisepticus) protein is NAD(P)H-hydrate epimerase.